Consider the following 298-residue polypeptide: MKIVLAESLGFCYGVNRAVEATKRLLKEKRDARVIGDIVHNEIVMKKLKDMGLKVYPDLSSIDFSDTAENSVAIIRAHGASPDVEDFLKRRFGYVVDLTCPIVYNVFSLAKDLEKKGYFIVIFGKKDHAEVKALCGRLNDYLIVEPGYDFETIKAFLREKKPKKVALISQTTMNSESFEKLAEKLLKLEGIEVSVNNTICNVTINREKMAIHLAQTCDAVVVVGGKRSSNTGKLAKIVESHGKRAFHVQNPEQLPDLSIYRKVGIISGTSTPKEQILKILDYIKFTYEGEVIRNGGEV.

Residue Cys-12 coordinates [4Fe-4S] cluster. Residues His-40 and His-78 each coordinate (2E)-4-hydroxy-3-methylbut-2-enyl diphosphate. Dimethylallyl diphosphate contacts are provided by His-40 and His-78. Isopentenyl diphosphate is bound by residues His-40 and His-78. Cys-100 contributes to the [4Fe-4S] cluster binding site. His-128 lines the (2E)-4-hydroxy-3-methylbut-2-enyl diphosphate pocket. His-128 is a dimethylallyl diphosphate binding site. Isopentenyl diphosphate is bound at residue His-128. Glu-130 serves as the catalytic Proton donor. Thr-171 is a binding site for (2E)-4-hydroxy-3-methylbut-2-enyl diphosphate. Cys-200 provides a ligand contact to [4Fe-4S] cluster. Residues Ser-228, Ser-229, Asn-230, and Ser-270 each contribute to the (2E)-4-hydroxy-3-methylbut-2-enyl diphosphate site. Residues Ser-228, Ser-229, Asn-230, and Ser-270 each coordinate dimethylallyl diphosphate. Isopentenyl diphosphate-binding residues include Ser-228, Ser-229, Asn-230, and Ser-270.

This sequence belongs to the IspH family. [4Fe-4S] cluster is required as a cofactor.

The enzyme catalyses isopentenyl diphosphate + 2 oxidized [2Fe-2S]-[ferredoxin] + H2O = (2E)-4-hydroxy-3-methylbut-2-enyl diphosphate + 2 reduced [2Fe-2S]-[ferredoxin] + 2 H(+). It carries out the reaction dimethylallyl diphosphate + 2 oxidized [2Fe-2S]-[ferredoxin] + H2O = (2E)-4-hydroxy-3-methylbut-2-enyl diphosphate + 2 reduced [2Fe-2S]-[ferredoxin] + 2 H(+). It functions in the pathway isoprenoid biosynthesis; dimethylallyl diphosphate biosynthesis; dimethylallyl diphosphate from (2E)-4-hydroxy-3-methylbutenyl diphosphate: step 1/1. The protein operates within isoprenoid biosynthesis; isopentenyl diphosphate biosynthesis via DXP pathway; isopentenyl diphosphate from 1-deoxy-D-xylulose 5-phosphate: step 6/6. Its function is as follows. Catalyzes the conversion of 1-hydroxy-2-methyl-2-(E)-butenyl 4-diphosphate (HMBPP) into a mixture of isopentenyl diphosphate (IPP) and dimethylallyl diphosphate (DMAPP). Acts in the terminal step of the DOXP/MEP pathway for isoprenoid precursor biosynthesis. The sequence is that of 4-hydroxy-3-methylbut-2-enyl diphosphate reductase from Kosmotoga olearia (strain ATCC BAA-1733 / DSM 21960 / TBF 19.5.1).